We begin with the raw amino-acid sequence, 340 residues long: Glutamyl-tRNA reductase (340 aa).

Substrate contacts are provided by residues 49–52 (TCNR), serine 108, 113–115 (ETE), and glutamine 119. The active-site Nucleophile is cysteine 50. 188 to 193 (GAGEMS) is an NADP(+) binding site.

This sequence belongs to the glutamyl-tRNA reductase family. Homodimer.

The catalysed reaction is (S)-4-amino-5-oxopentanoate + tRNA(Glu) + NADP(+) = L-glutamyl-tRNA(Glu) + NADPH + H(+). It participates in porphyrin-containing compound metabolism; protoporphyrin-IX biosynthesis; 5-aminolevulinate from L-glutamyl-tRNA(Glu): step 1/2. Catalyzes the NADPH-dependent reduction of glutamyl-tRNA(Glu) to glutamate 1-semialdehyde (GSA). The protein is Glutamyl-tRNA reductase of Akkermansia muciniphila (strain ATCC BAA-835 / DSM 22959 / JCM 33894 / BCRC 81048 / CCUG 64013 / CIP 107961 / Muc).